A 78-amino-acid polypeptide reads, in one-letter code: Exodeoxyribonuclease 7 small subunit (78 aa).

The protein belongs to the XseB family. In terms of assembly, heterooligomer composed of large and small subunits.

The protein resides in the cytoplasm. The enzyme catalyses Exonucleolytic cleavage in either 5'- to 3'- or 3'- to 5'-direction to yield nucleoside 5'-phosphates.. Bidirectionally degrades single-stranded DNA into large acid-insoluble oligonucleotides, which are then degraded further into small acid-soluble oligonucleotides. This chain is Exodeoxyribonuclease 7 small subunit, found in Idiomarina loihiensis (strain ATCC BAA-735 / DSM 15497 / L2-TR).